We begin with the raw amino-acid sequence, 181 residues long: Ribulose bisphosphate carboxylase small subunit, chloroplastic 1 (181 aa).

The N-terminal 54 residues, 1-54, are a transit peptide targeting the chloroplast; sequence MASSMLSSAAVVTSPAQATMVAPFTGLKSSSAFPVTRKANNDITSIVSNGGRVS.

This sequence belongs to the RuBisCO small chain family. Heterohexadecamer of 8 large and 8 small subunits.

The protein localises to the plastid. The protein resides in the chloroplast. RuBisCO catalyzes two reactions: the carboxylation of D-ribulose 1,5-bisphosphate, the primary event in carbon dioxide fixation, as well as the oxidative fragmentation of the pentose substrate. Both reactions occur simultaneously and in competition at the same active site. Although the small subunit is not catalytic it is essential for maximal activity. The sequence is that of Ribulose bisphosphate carboxylase small subunit, chloroplastic 1 from Brassica napus (Rape).